Reading from the N-terminus, the 65-residue chain is MNGKVKWFNNEKGFGFIEMEGSEDVFVHFSAIQSDGYKALEEGQEVSFDITEGNRGPQAANVAKL.

The CSD domain occupies 3–62 (GKVKWFNNEKGFGFIEMEGSEDVFVHFSAIQSDGYKALEEGQEVSFDITEGNRGPQAANV).

Homodimer.

The protein localises to the cytoplasm. The chain is Cold shock-like protein CspB (cspB) from Bacillus cereus.